The following is a 464-amino-acid chain: Cysteine--tRNA ligase (464 aa).

Position 29 (cysteine 29) interacts with Zn(2+). A 'HIGH' region motif is present at residues 31-41 (ATVQGDPHIGH). Zn(2+) is bound by residues cysteine 207, histidine 232, and glutamate 236. The 'KMSKS' region motif lies at 263-267 (KMSKS). Residue lysine 266 coordinates ATP.

It belongs to the class-I aminoacyl-tRNA synthetase family. Monomer. Requires Zn(2+) as cofactor.

Its subcellular location is the cytoplasm. The enzyme catalyses tRNA(Cys) + L-cysteine + ATP = L-cysteinyl-tRNA(Cys) + AMP + diphosphate. The chain is Cysteine--tRNA ligase from Rhodococcus opacus (strain B4).